The sequence spans 564 residues: Isopullulanase (564 aa).

The N-terminal stretch at 1-19 is a signal peptide; sequence MRSTGYLLTLSAAFQVAQA. 15 N-linked (GlcNAc...) asparagine glycosylation sites follow: Asn24, Asn94, Asn115, Asn138, Asn186, Asn210, Asn305, Asn381, Asn448, Asn455, Asn460, Asn486, Asn491, Asn503, and Asn535.

N-glycosylated.

The protein localises to the secreted. The catalysed reaction is Hydrolysis of pullulan to isopanose (6-alpha-maltosylglucose).. Its function is as follows. Hydrolyzes pullulan, a linear polymer which is composed of maltotriose units with alpha-1,6 glucosidic linkages, to produce isopanose (Glca1-4Glca1-6Glc). This is Isopullulanase (ipuA) from Aspergillus niger.